The following is a 569-amino-acid chain: Sugar transporter STL1 (569 aa).

The Cytoplasmic portion of the chain corresponds to 1 to 29; the sequence is MKDLKLSNFKGKFISRTSHWGLTGKKLRY. Residues 30–50 form a helical membrane-spanning segment; the sequence is FITIASMTGFSLFGYDQGLMA. Over 51–79 the chain is Extracellular; that stretch reads SLITGKQFNYEFPATKENGDHDRHATVVQ. Residues 80–100 traverse the membrane as a helical segment; that stretch reads GATTSCYELGCFAGSLFVMFC. At 101–107 the chain is on the cytoplasmic side; it reads GERIGRK. A helical membrane pass occupies residues 108–128; that stretch reads PLILMGSVITIIGAVISTCAF. Arginine 129 is a topological domain (extracellular). The chain crosses the membrane as a helical span at residues 130–150; that stretch reads GYWALGQFIIGRVVTGVGTGL. Residues 151 to 168 are Cytoplasmic-facing; sequence NTSTIPVWQSEMSKAENR. Residues 169-189 form a helical membrane-spanning segment; sequence GLLVNLEGSTIAFGTMIAYWI. Over 190–203 the chain is Extracellular; sequence DFGLSYTNSSVQWR. N-linked (GlcNAc...) asparagine glycosylation is present at asparagine 197. Residues 204–224 traverse the membrane as a helical segment; sequence FPVSMQIVFALFLLAFMIKLP. Residues 225 to 291 lie on the Cytoplasmic side of the membrane; that stretch reads ESPRWLISQS…SRGRSQNLQR (67 aa). A helical membrane pass occupies residues 292 to 312; it reads ALIAASTQFFQQFTGCNAAIY. Residues 313–330 lie on the Extracellular side of the membrane; it reads YSTVLFNKTIKLDYRLSM. An N-linked (GlcNAc...) asparagine glycan is attached at asparagine 319. The helical transmembrane segment at 331 to 351 threads the bilayer; that stretch reads IIGGVFATIYALSTIGSFFLI. Residues 352–358 lie on the Cytoplasmic side of the membrane; it reads EKLGRRK. The chain crosses the membrane as a helical span at residues 359–379; it reads LFLLGATGQAVSFTITFACLV. Residues 380 to 389 lie on the Extracellular side of the membrane; it reads KENKENARGA. The chain crosses the membrane as a helical span at residues 390 to 410; sequence AVGLFLFITFFGLSLLSLPWI. The Cytoplasmic segment spans residues 411-426; the sequence is YPPEIASMKVRASTNA. The chain crosses the membrane as a helical span at residues 427 to 447; the sequence is FSTCTNWLCNFAVVMFTPIFI. Residues 448 to 453 are Extracellular-facing; it reads GQSGWG. A helical transmembrane segment spans residues 454–474; sequence CYLFFAVMNYLYIPVIFFFYP. Residues 475 to 569 are Cytoplasmic-facing; that stretch reads ETAGRSLEEI…TVNDKANFEG (95 aa). Residues 524–533 are compositionally biased toward acidic residues; sequence DDEMEKEDFG. A disordered region spans residues 524-569; that stretch reads DDEMEKEDFGEDRVEDTYNQINGDNSSSSSNIKNEDTVNDKANFEG. The span at 556 to 569 shows a compositional bias: basic and acidic residues; the sequence is KNEDTVNDKANFEG.

Belongs to the major facilitator superfamily. Sugar transporter (TC 2.A.1.1) family.

Its subcellular location is the membrane. In Saccharomyces cerevisiae (strain ATCC 204508 / S288c) (Baker's yeast), this protein is Sugar transporter STL1 (STL1).